The sequence spans 108 residues: Phosphoribosyl-ATP pyrophosphatase (108 aa).

It belongs to the PRA-PH family.

The protein localises to the cytoplasm. The enzyme catalyses 1-(5-phospho-beta-D-ribosyl)-ATP + H2O = 1-(5-phospho-beta-D-ribosyl)-5'-AMP + diphosphate + H(+). Its pathway is amino-acid biosynthesis; L-histidine biosynthesis; L-histidine from 5-phospho-alpha-D-ribose 1-diphosphate: step 2/9. This Geobacter sulfurreducens (strain ATCC 51573 / DSM 12127 / PCA) protein is Phosphoribosyl-ATP pyrophosphatase.